The primary structure comprises 136 residues: Large-conductance mechanosensitive channel (136 aa).

2 consecutive transmembrane segments (helical) span residues 9 to 29 (AFAS…GAAF) and 79 to 99 (IQTI…LKAI).

Belongs to the MscL family. In terms of assembly, homopentamer.

The protein localises to the cell inner membrane. Channel that opens in response to stretch forces in the membrane lipid bilayer. May participate in the regulation of osmotic pressure changes within the cell. This Shewanella sp. (strain ANA-3) protein is Large-conductance mechanosensitive channel.